The following is a 372-amino-acid chain: N-acetylneuraminate-9-phosphate synthase (372 aa).

Positions 314 to 372 constitute an AFP-like domain; the sequence is SIVAARNLNKGYRLQLADMAIKVSEPSGLTAEDFLDLVGKELADNIGEDEPILGNSIIN.

The enzyme catalyses aldehydo-N-acetyl-D-mannosamine 6-phosphate + phosphoenolpyruvate + H2O = N-acetylneuraminate 9-phosphate + phosphate. The catalysed reaction is aldehydo-D-mannose 6-phosphate + phosphoenolpyruvate + H2O = 3-deoxy-D-glycero-beta-D-galacto-non-2-ulopyranosonate 9-phosphate + phosphate. Its function is as follows. Catalyzes the condensation of phosphoenolpyruvate (PEP) and N-acetylmannosamine 6-phosphate (ManNAc-6-P) or D-mannose 6-phosphate (Man-6-P) to generate the phosphorylated forms of both the sialic acids N-acetylneuraminic acid (Neu5Ac) and deaminoneuraminic acid (KDN), respectively. Essential for biosynthesis of sialic acids in neurons of the central nervous system. The protein is N-acetylneuraminate-9-phosphate synthase of Drosophila melanogaster (Fruit fly).